The chain runs to 561 residues: MKVWMAILISILCWQSSSWAVCPAWSPARAQEEISRLQQQIKQWDDDYWKEGKSEVEDGVYDQLSARLTQWQRCFGEETHRDAMMPPLNGAVIHPVAHTGVRKMADKIALSLWMRERSDLWVQPKVDGVAVTLVYRDGKLNKAISRGNGLKGEDWTQKVRLISAVPQTVSGPLANSTLQGEIFLKREGHIQQQMGGINARAKVADLMMRQDDSDTLNSLGVFVWAWPDGPQLMTDRLKELATAGFTLTQTYTRAVKNADEVARVRNAWWKTKLPFVTDGVVVRAAKEPESRHWLPGQAEWLVAWKYQPVAQVAEVKAIQFAVGKSGKISVVASLAPVMLDDKKVQRVNIGSVRRWQEWNIAPGDQILVSLAGQGIPRIDDVVWRGAERTKPTPPENRFNSLTCYFASDVCQEQFISRLVWLGSKQVLGLDGIGEAGWRSLHQTHRFEHIFSWLLLTPEQLQNTPGIAKSKSAQLWHQFNLARQQPFTRWVMAMGIPLTRAALNASDERSWSQLLLSTEQFWQQLPGTGSGRVRQVIEWKENAQIKKLGSWLAAQQITGFEP.

The active-site N6-AMP-lysine intermediate is the Lys-125.

It belongs to the NAD-dependent DNA ligase family. LigB subfamily.

It carries out the reaction NAD(+) + (deoxyribonucleotide)n-3'-hydroxyl + 5'-phospho-(deoxyribonucleotide)m = (deoxyribonucleotide)n+m + AMP + beta-nicotinamide D-nucleotide.. In terms of biological role, catalyzes the formation of phosphodiester linkages between 5'-phosphoryl and 3'-hydroxyl groups in double-stranded DNA using NAD as a coenzyme and as the energy source for the reaction. This chain is DNA ligase B, found in Escherichia coli O127:H6 (strain E2348/69 / EPEC).